Here is a 292-residue protein sequence, read N- to C-terminus: NAD kinase (292 aa).

D73 serves as the catalytic Proton acceptor. NAD(+)-binding positions include 73–74, 147–148, H158, R175, D177, 188–193, and Q247; these read DG, NE, and TAYSLS.

The protein belongs to the NAD kinase family. A divalent metal cation is required as a cofactor.

The protein resides in the cytoplasm. The enzyme catalyses NAD(+) + ATP = ADP + NADP(+) + H(+). In terms of biological role, involved in the regulation of the intracellular balance of NAD and NADP, and is a key enzyme in the biosynthesis of NADP. Catalyzes specifically the phosphorylation on 2'-hydroxyl of the adenosine moiety of NAD to yield NADP. The chain is NAD kinase from Salmonella dublin (strain CT_02021853).